The chain runs to 195 residues: dCTP deaminase (195 aa).

DCTP is bound by residues 110-115, D128, 136-138, Y171, K178, and Q182; these read RSSLAR and VLE. Catalysis depends on E138, which acts as the Proton donor/acceptor. Positions 169–179 are enriched in basic and acidic residues; it reads RPYSSRKDAKY. The tract at residues 169-195 is disordered; the sequence is RPYSSRKDAKYKNQQSAVASRIDEDKE.

Belongs to the dCTP deaminase family. Homotrimer.

It carries out the reaction dCTP + H2O + H(+) = dUTP + NH4(+). The protein operates within pyrimidine metabolism; dUMP biosynthesis; dUMP from dCTP (dUTP route): step 1/2. Catalyzes the deamination of dCTP to dUTP. The sequence is that of dCTP deaminase from Haemophilus influenzae (strain 86-028NP).